Reading from the N-terminus, the 524-residue chain is Cytochrome P450 monooxygenase ankB (524 aa).

A helical transmembrane segment spans residues 22–42 (FHALSIQAPGLLLGTLLFYLF). C466 is a heme binding site.

Belongs to the cytochrome P450 family. Requires heme as cofactor.

It is found in the membrane. The catalysed reaction is cyclo(L-arginyl-tyrosyl) + reduced [NADPH--hemoprotein reductase] + O2 = cyclo(L-arginyl-L-dehydrotyrosyl) + oxidized [NADPH--hemoprotein reductase] + 2 H2O + H(+). The protein operates within alkaloid biosynthesis. Cytochrome P450 monooxygenase; part of the ank cluster that mediates the biosynthesis of NK13650 C, a highly modified cyclo-arginine-tyrosine dipeptide. AnkB is responsible for desaturation of the ankA product cyclo-Arg-Tyr diketopiperazine, likely through hydroxylation of the benzylic position followed by dehydration to yield a dehydro-cyclodipeptide. Within the pathway, the cyclodipeptide synthase ankA acts as the scaffold-generating enzyme and is responsible for formation of the cyclo-Arg-Tyr diketopiperazine (cRY) from L-Arg and L-Tyr. The ankA product cRY is desaturated by the cytochrome P450 monooxygenase ankB to yield a dehydro-cyclodipeptide intermediate. The FAD-dependent monooxygenase ankC then installs the m-OH, ankD catalyzes the attachment of L-homoserine, and ankE ligates citrate to the ankD product to yield NK13650 B. The O-methyltransferase ankF is responsible for methylation of the C-17 phenol group of NK13650 B to produce NK13650 D. Amidation of NK13650 D with L-Asp by ankG then leads to the production of NK13650 C, whereas amidation of NK13650 B produces NK13650 A. This is Cytochrome P450 monooxygenase ankB from Aspergillus thermomutatus (Neosartorya pseudofischeri).